The primary structure comprises 199 residues: Recombination protein RecR (199 aa).

The C4-type zinc-finger motif lies at 56–71; the sequence is CATCGNVAQEEQCNIC. The 96-residue stretch at 79–174 folds into the Toprim domain; that stretch reads SVICVVEEPK…KVTRLASGLP (96 aa).

The protein belongs to the RecR family.

Its function is as follows. May play a role in DNA repair. It seems to be involved in an RecBC-independent recombinational process of DNA repair. It may act with RecF and RecO. The sequence is that of Recombination protein RecR from Streptomyces coelicolor (strain ATCC BAA-471 / A3(2) / M145).